A 257-amino-acid polypeptide reads, in one-letter code: Imidazole glycerol phosphate synthase subunit HisF (257 aa).

Active-site residues include Asp11 and Asp130.

It belongs to the HisA/HisF family. As to quaternary structure, heterodimer of HisH and HisF.

Its subcellular location is the cytoplasm. The catalysed reaction is 5-[(5-phospho-1-deoxy-D-ribulos-1-ylimino)methylamino]-1-(5-phospho-beta-D-ribosyl)imidazole-4-carboxamide + L-glutamine = D-erythro-1-(imidazol-4-yl)glycerol 3-phosphate + 5-amino-1-(5-phospho-beta-D-ribosyl)imidazole-4-carboxamide + L-glutamate + H(+). It functions in the pathway amino-acid biosynthesis; L-histidine biosynthesis; L-histidine from 5-phospho-alpha-D-ribose 1-diphosphate: step 5/9. In terms of biological role, IGPS catalyzes the conversion of PRFAR and glutamine to IGP, AICAR and glutamate. The HisF subunit catalyzes the cyclization activity that produces IGP and AICAR from PRFAR using the ammonia provided by the HisH subunit. The chain is Imidazole glycerol phosphate synthase subunit HisF from Shewanella piezotolerans (strain WP3 / JCM 13877).